The chain runs to 271 residues: Mannosyl-3-phosphoglycerate phosphatase (271 aa).

Aspartate 13 acts as the Nucleophile in catalysis. Mg(2+) is bound by residues aspartate 13, aspartate 15, and aspartate 214.

This sequence belongs to the HAD-like hydrolase superfamily. MPGP family. Mg(2+) serves as cofactor.

The protein resides in the cytoplasm. The catalysed reaction is 2-O-(alpha-D-mannosyl)-3-phosphoglycerate + H2O = (2R)-2-O-(alpha-D-mannosyl)-glycerate + phosphate. This Escherichia coli (strain K12 / DH10B) protein is Mannosyl-3-phosphoglycerate phosphatase.